Consider the following 213-residue polypeptide: MSKEELLQELADAIISCKKDTVLAVVEKAKGELEPSEIIEKGLAAGMNEVGVRFERGKLFLPHVMMAADAMTAGVAALKDLMPEGASGSKLGVIVNGTVEGDVHDIGKAIVSTMLQSAGFEVHDIGRDVPIRNFIEKAKEVNADMIGISALMTTTLQGQKSVIELLKEEGLRDKVKVMVGGAPATQAWADKIGADCYAENATEAVAKAKELLA.

The B12-binding N-terminal domain occupies 1-90 (MSKEELLQEL…LMPEGASGSK (90 aa)). In terms of domain architecture, B12-binding spans 91 to 213 (LGVIVNGTVE…AVAKAKELLA (123 aa)). Position 104 (His-104) interacts with methylcob(III)alamin.

The protein belongs to the methylamine corrinoid protein family. As to quaternary structure, copurifies with MtbA.

It participates in one-carbon metabolism; methanogenesis from dimethylamine. In terms of biological role, acts as a methyl group carrier between MtbB1 and MtbA. Binds 1 corrinoid cofactor per protein, is subsequently demethylated by MtbA. The chain is Dimethylamine corrinoid protein from Methanosarcina barkeri.